Consider the following 247-residue polypeptide: tRNA (guanine-N(1)-)-methyltransferase (247 aa).

S-adenosyl-L-methionine-binding positions include Gly112 and 132–137; that span reads IGDFVL.

Belongs to the RNA methyltransferase TrmD family. Homodimer.

The protein localises to the cytoplasm. The enzyme catalyses guanosine(37) in tRNA + S-adenosyl-L-methionine = N(1)-methylguanosine(37) in tRNA + S-adenosyl-L-homocysteine + H(+). Its function is as follows. Specifically methylates guanosine-37 in various tRNAs. This Geotalea uraniireducens (strain Rf4) (Geobacter uraniireducens) protein is tRNA (guanine-N(1)-)-methyltransferase.